Reading from the N-terminus, the 217-residue chain is Carboxylesterase Culp1 (217 aa).

The signal sequence occupies residues M1–A32. C35 and C107 are joined by a disulfide. Residue S118 is the Nucleophile of the active site. C177 and C184 are joined by a disulfide. D181 is a catalytic residue. H193 (proton donor/acceptor) is an active-site residue.

This sequence belongs to the cutinase family.

The protein resides in the secreted. The enzyme catalyses a fatty acid ester + H2O = an aliphatic alcohol + a fatty acid + H(+). Shows esterase activity, with a preference for short- and medium-chain fatty acids. This chain is Carboxylesterase Culp1, found in Mycobacterium bovis (strain ATCC BAA-935 / AF2122/97).